The chain runs to 219 residues: Vacuolar protein sorting-associated protein 20 homolog 1 (219 aa).

Residues 20–60 adopt a coiled-coil conformation; it reads SLKTQRRKLGQYQQKLEKVIEAEKQAARDLIREKRKDRALL. The interval 171–219 is disordered; the sequence is PEVPTKESEESEKLDLPDVPTKTPVASNAEITPAESATKTKVLEEPLPA. Basic and acidic residues predominate over residues 174-186; the sequence is PTKESEESEKLDL. The span at 194-209 shows a compositional bias: polar residues; that stretch reads PVASNAEITPAESATK.

It belongs to the SNF7 family. Component of the endosomal sorting required for transport complex III (ESCRT-III), composed at least of VPS2, VPS20, VPS24 and VPS32. Interacts with SKD1.

It localises to the endosome. Its function is as follows. Component of the ESCRT-III complex, which is required for multivesicular bodies (MVBs) formation and sorting of endosomal cargo proteins into MVBs. The ESCRT-III complex is probably involved in the concentration of MVB cargo. This Arabidopsis thaliana (Mouse-ear cress) protein is Vacuolar protein sorting-associated protein 20 homolog 1 (VPS20.1).